The primary structure comprises 1384 residues: Sterol 3-beta-glucosyltransferase (1384 aa).

Disordered stretches follow at residues 1–64 (MPNM…DGQL), 86–189 (ARFD…TPRA), and 204–229 (DKKQ…QSCA). Basic and acidic residues predominate over residues 7-19 (LLEDAKRRVDRRL). Residues 21 to 36 (ASRQSISSSRIFSSAF) are compositionally biased toward low complexity. Residues 38 to 47 (DRLKDDHDAQ) are compositionally biased toward basic and acidic residues. A compositionally biased stretch (low complexity) spans 146–156 (LRSLKPSPKSS). The span at 158–172 (GTETTVQTEPPTSDE) shows a compositional bias: polar residues. The segment covering 174–189 (SPLASPRRARSATPRA) has biased composition (low complexity). Polar residues predominate over residues 209–229 (ADQPSSSTKGETDGTSEQSCA). In terms of domain architecture, GRAM 1 spans 237-284 (KEMFGFEMPEKVLMEYACSLLQNILLQGYMYVTEGHICFYAYLPRKSA). Residues 285 to 384 (VTIRSGYLHK…WVKALQKVIF (100 aa)) form the PH domain. 2 disordered regions span residues 457-526 (MKTS…RQRD) and 560-629 (NRSD…VNSS). Composition is skewed to polar residues over residues 458 to 473 (KTSQ…TSPA), 483 to 494 (WSLNSDLSQSRG), and 560 to 572 (NRSD…TIHT). Basic and acidic residues predominate over residues 578–588 (PSGDRTGRRLS). Over residues 604-629 (RNGQEMQYASSDSDQGTQHPSKVNSS) the composition is skewed to polar residues. The 104-residue stretch at 714–817 (RFRAHFALPS…RDDCAVTVHQ (104 aa)) folds into the GRAM 2 domain. UDP-alpha-D-glucose is bound by residues S901, R902, D904, A1204, H1206, H1219, G1223, T1224, D1243, and Q1244. Over residues 1322–1336 (VSSTPFSPTPSAKTT) the composition is skewed to polar residues. A disordered region spans residues 1322–1350 (VSSTPFSPTPSAKTTAEQEEDDVDDSEEW). The span at 1338-1350 (EQEEDDVDDSEEW) shows a compositional bias: acidic residues.

The protein belongs to the glycosyltransferase 28 family.

The protein localises to the cytoplasm. Its subcellular location is the preautophagosomal structure membrane. It catalyses the reaction a sterol + UDP-alpha-D-glucose = a sterol 3-beta-D-glucoside + UDP + H(+). It carries out the reaction ergosterol + UDP-alpha-D-glucose = ergosteryl 3-beta-D-glucoside + UDP + H(+). In terms of biological role, sterol glycosyltransferase responsible for the glycosylation of ergosterol to form ergosterol-glucoside. Involved in cytoplasm to vacuole transport (Cvt), pexophagy or nonselective autophagy. The chain is Sterol 3-beta-glucosyltransferase from Aspergillus oryzae (strain ATCC 42149 / RIB 40) (Yellow koji mold).